Reading from the N-terminus, the 445-residue chain is CBL-interacting protein kinase 3 (445 aa).

The Protein kinase domain occupies Y19 to F274. ATP-binding positions include I25–V33 and K48. D142 (proton acceptor) is an active-site residue. The activation loop stretch occupies residues D160–E189. The NAF domain occupies A309 to E336. The tract at residues K342 to I371 is PPI.

Belongs to the protein kinase superfamily. CAMK Ser/Thr protein kinase family. SNF1 subfamily. Requires Mn(2+) as cofactor.

The enzyme catalyses L-seryl-[protein] + ATP = O-phospho-L-seryl-[protein] + ADP + H(+). It carries out the reaction L-threonyl-[protein] + ATP = O-phospho-L-threonyl-[protein] + ADP + H(+). Functionally, CIPK serine-threonine protein kinases interact with CBL proteins. Binding of a CBL protein to the regulatory NAF domain of CIPK protein lead to the activation of the kinase in a calcium-dependent manner. The chain is CBL-interacting protein kinase 3 (CIPK3) from Oryza sativa subsp. japonica (Rice).